The following is a 101-amino-acid chain: Small ribosomal subunit protein bS18c (101 aa).

It belongs to the bacterial ribosomal protein bS18 family. In terms of assembly, part of the 30S ribosomal subunit.

The protein localises to the plastid. It is found in the chloroplast. This Gossypium barbadense (Sea Island cotton) protein is Small ribosomal subunit protein bS18c.